The primary structure comprises 118 residues: Large ribosomal subunit protein bL20 (118 aa).

The protein belongs to the bacterial ribosomal protein bL20 family.

Functionally, binds directly to 23S ribosomal RNA and is necessary for the in vitro assembly process of the 50S ribosomal subunit. It is not involved in the protein synthesizing functions of that subunit. In Psychromonas ingrahamii (strain DSM 17664 / CCUG 51855 / 37), this protein is Large ribosomal subunit protein bL20.